Reading from the N-terminus, the 289-residue chain is Energy-coupling factor transporter ATP-binding protein EcfA2 (289 aa).

Residues Ile-3–Asn-246 form the ABC transporter domain. Residue Gly-40–Ser-47 participates in ATP binding.

This sequence belongs to the ABC transporter superfamily. Energy-coupling factor EcfA family. In terms of assembly, forms a stable energy-coupling factor (ECF) transporter complex composed of 2 membrane-embedded substrate-binding proteins (S component), 2 ATP-binding proteins (A component) and 2 transmembrane proteins (T component).

The protein localises to the cell membrane. Functionally, ATP-binding (A) component of a common energy-coupling factor (ECF) ABC-transporter complex. Unlike classic ABC transporters this ECF transporter provides the energy necessary to transport a number of different substrates. This is Energy-coupling factor transporter ATP-binding protein EcfA2 from Ligilactobacillus salivarius (strain UCC118) (Lactobacillus salivarius).